Here is a 75-residue protein sequence, read N- to C-terminus: Protein P8 (75 aa).

The tract at residues 19–47 (PMGGMPSIASSSSAETGQQTQSGNFTGGG) is disordered. The segment covering 26–39 (IASSSSAETGQQTQ) has biased composition (polar residues). Residues 55–72 (NNQLLIVGAVVIGLFLVI) form a helical membrane-spanning segment.

It is found in the virion membrane. This is Protein P8 (VIII) from Pseudoalteromonas phage PM2 (Bacteriophage PM2).